Reading from the N-terminus, the 230-residue chain is TorCAD operon transcriptional regulatory protein TorR (230 aa).

The region spanning 4–117 (HIVIVEDEPV…ELVVRVKNLL (114 aa)) is the Response regulatory domain. Position 53 is a 4-aspartylphosphate (aspartate 53). A DNA-binding region (ompR/PhoB-type) is located at residues 132–227 (DNCYRFAGYC…QHGEGYFLAA (96 aa)).

In terms of assembly, interacts with TorI. TorI binds to the effector domain of TorR. This interaction, which does not interfere with TorR DNA binding activity, probably prevents the recruitment of RNA polymerase to the torCAD promoter. Post-translationally, phosphorylated and dephosphorylated by TorS.

It localises to the cytoplasm. Functionally, member of the two-component regulatory system TorS/TorR involved in the anaerobic utilization of trimethylamine-N-oxide (TMAO). Phosphorylated TorR activates the transcription of the torCAD operon by binding to four decameric boxes located in the torCAD promoter. Box1, 2 and 4 contain the DNA sequence 5'-CTGTTCATAT-3' and box3 contains the DNA sequence 5'-CCGTTCATCC-3'. Phosphorylated as well as unphosphorylated TorR negatively regulates its own expression by binding to box1 and 2. In Escherichia coli (strain K12), this protein is TorCAD operon transcriptional regulatory protein TorR (torR).